We begin with the raw amino-acid sequence, 255 residues long: Tumor necrosis factor receptor superfamily member 9 (255 aa).

Positions 1 to 23 (MGNSCYNIVATLLLVLNFERTRS) are cleaved as a signal peptide. TNFR-Cys repeat units lie at residues 24 to 45 (LQDP…NQIC), 47 to 86 (PCPP…NAEC), 87 to 118 (DCTP…KGCK), and 119 to 159 (DCCF…VVCG). Topologically, residues 24-186 (LQDPCSNCPA…PAREPGHSPQ (163 aa)) are extracellular. Cystine bridges form between cysteine 28–cysteine 37, cysteine 31–cysteine 45, cysteine 48–cysteine 62, cysteine 65–cysteine 78, cysteine 68–cysteine 86, cysteine 88–cysteine 94, cysteine 99–cysteine 106, cysteine 102–cysteine 117, and cysteine 121–cysteine 133. N-linked (GlcNAc...) asparagine glycans are attached at residues asparagine 138 and asparagine 149. Cysteine 139 and cysteine 158 are oxidised to a cystine. Positions 161–180 (SPADLSPGASSVTPPAPARE) are disordered. Residues 187–213 (IISFFLALTSTALLFLLFFLTLRFSVV) form a helical membrane-spanning segment. The Cytoplasmic segment spans residues 214 to 255 (KRGRKKLLYIFKQPFMRPVQTTQEEDGCSCRFPEEEEGGCEL). The tract at residues 214–255 (KRGRKKLLYIFKQPFMRPVQTTQEEDGCSCRFPEEEEGGCEL) is interaction with LRR-1.

As to quaternary structure, predominantly homodimeric, but may also exist as a monomer. Interacts with TRAF1, TRAF2 and TRAF3. Interacts with LRR-repeat protein 1/LRR-1. As to expression, expressed on the surface of activated T-cells.

It is found in the cell membrane. Receptor for TNFSF9/4-1BBL. Conveys a signal that enhances CD8(+) T-cell survival, cytotoxicity, and mitochondrial activity, thereby promoting immunity against viruses and tumors. The sequence is that of Tumor necrosis factor receptor superfamily member 9 (TNFRSF9) from Homo sapiens (Human).